Here is a 560-residue protein sequence, read N- to C-terminus: Glucose-6-phosphate isomerase, cytosolic (560 aa).

N-acetylalanine is present on Ala2. Glu361 (proton donor) is an active-site residue. Catalysis depends on residues His392 and Lys517.

The protein belongs to the GPI family. In terms of assembly, homodimer.

Its subcellular location is the cytoplasm. The enzyme catalyses alpha-D-glucose 6-phosphate = beta-D-fructose 6-phosphate. It participates in carbohydrate degradation; glycolysis; D-glyceraldehyde 3-phosphate and glycerone phosphate from D-glucose: step 2/4. Its activity is regulated as follows. Inhibited by glycerol-3-P (G3P). The chain is Glucose-6-phosphate isomerase, cytosolic (PGIC) from Arabidopsis thaliana (Mouse-ear cress).